The sequence spans 270 residues: Peflin (270 aa).

The segment at Met1–Val97 is disordered. Repeat copies occupy residues Pro22–Gly30, Pro44–Pro54, Gly62–Gly70, Ala72–Gly81, and Pro83–Gln91. The 5 X 9 AA approximate tandem repeat of [AP]-P-G-G-P-Y-G-G-P-P stretch occupies residues Pro22–Gln91. 2 stretches are compositionally biased toward low complexity: residues Pro26–Gln47 and Tyr55–Pro66. Residues Tyr67–Gln84 are compositionally biased toward gly residues. EF-hand domains lie at Gly100–Ser135, Thr141–Leu169, Gln170–Asn202, Leu203–Met239, and Thr240–Leu269. Residues Asp113, Asp115, Ser117, Tyr119, and Glu124 each contribute to the Ca(2+) site. Asp180, Asp182, Ser184, Ser186, and Glu191 together coordinate Ca(2+).

Heterodimer; heterodimerizes (via the EF-hand 5) with pdcd6.

It is found in the cytoplasm. The protein resides in the endoplasmic reticulum. Its subcellular location is the membrane. It localises to the cytoplasmic vesicle. The protein localises to the COPII-coated vesicle membrane. Functionally, calcium-binding protein that acts as an adapter that bridges unrelated proteins or stabilizes weak protein-protein complexes in response to calcium. Acts as a negative regulator of ER-Golgi transport. The protein is Peflin of Danio rerio (Zebrafish).